An 883-amino-acid polypeptide reads, in one-letter code: Phosphoenolpyruvate carboxylase (883 aa).

Residues H138 and K546 contribute to the active site.

It belongs to the PEPCase type 1 family. Mg(2+) is required as a cofactor.

The enzyme catalyses oxaloacetate + phosphate = phosphoenolpyruvate + hydrogencarbonate. Functionally, forms oxaloacetate, a four-carbon dicarboxylic acid source for the tricarboxylic acid cycle. The sequence is that of Phosphoenolpyruvate carboxylase from Escherichia coli O127:H6 (strain E2348/69 / EPEC).